The following is a 345-amino-acid chain: Ribonucleoside-diphosphate reductase subunit beta (345 aa).

D88, E118, and H121 together coordinate Fe cation. The active site involves Y125. Residues E185, E219, and H222 each contribute to the Fe cation site.

Belongs to the ribonucleoside diphosphate reductase small chain family. As to quaternary structure, tetramer of two alpha and two beta subunits. The cofactor is Fe cation.

The enzyme catalyses a 2'-deoxyribonucleoside 5'-diphosphate + [thioredoxin]-disulfide + H2O = a ribonucleoside 5'-diphosphate + [thioredoxin]-dithiol. In terms of biological role, provides the precursors necessary for DNA synthesis. Catalyzes the biosynthesis of deoxyribonucleotides from the corresponding ribonucleotides. The protein is Ribonucleoside-diphosphate reductase subunit beta (nrdB) of Halalkalibacterium halodurans (strain ATCC BAA-125 / DSM 18197 / FERM 7344 / JCM 9153 / C-125) (Bacillus halodurans).